Consider the following 347-residue polypeptide: Phosphoribosylformylglycinamidine cyclo-ligase (347 aa).

This sequence belongs to the AIR synthase family.

It is found in the cytoplasm. It carries out the reaction 2-formamido-N(1)-(5-O-phospho-beta-D-ribosyl)acetamidine + ATP = 5-amino-1-(5-phospho-beta-D-ribosyl)imidazole + ADP + phosphate + H(+). The protein operates within purine metabolism; IMP biosynthesis via de novo pathway; 5-amino-1-(5-phospho-D-ribosyl)imidazole from N(2)-formyl-N(1)-(5-phospho-D-ribosyl)glycinamide: step 2/2. The chain is Phosphoribosylformylglycinamidine cyclo-ligase from Prochlorococcus marinus (strain MIT 9215).